We begin with the raw amino-acid sequence, 962 residues long: CRACD-like protein (962 aa).

3 disordered regions span residues 38–102 (GKKK…PESG), 131–174 (NVKM…HDVG), and 212–871 (PAES…QEPV). Residues 46–61 (PSSTGSSTWKQSQTRN) show a composition bias toward polar residues. Ser-92 carries the post-translational modification Phosphoserine. A compositionally biased stretch (basic residues) spans 224–244 (AKHKLQVKPRNQRSSKMRRLS). The segment covering 245-256 (SRAQSESLSDLT) has biased composition (polar residues). Over residues 266 to 278 (EKPLLEVSPEERP) the composition is skewed to basic and acidic residues. 2 stretches are compositionally biased toward pro residues: residues 292 to 303 (EPGPPAPLPPPG) and 354 to 365 (PPSPPEGPPNPG). Residues 407 to 425 (PEGDTTPPETDPAATSEAP) show a composition bias toward low complexity. Basic and acidic residues-rich tracts occupy residues 429–440 (DGPERSVPKEAE) and 459–480 (EPER…ERIG). Ser-490 carries the post-translational modification Phosphoserine. Residues 503–521 (AAASEGPAASPPLAAAESP) are compositionally biased toward low complexity. Composition is skewed to basic and acidic residues over residues 536–546 (APERPKAERAE), 555–570 (AAPE…ELRG), 631–642 (KLAERGPQDSGD), and 709–728 (YSAE…EEKC). The segment covering 753–764 (PEPLSSKPPLPR) has biased composition (pro residues). Composition is skewed to basic and acidic residues over residues 784–806 (PGER…RGAE) and 844–869 (QEDK…RGQE).

In Homo sapiens (Human), this protein is CRACD-like protein.